The sequence spans 1052 residues: Lateral signaling target protein 2 homolog (1052 aa).

Disordered stretches follow at residues 311 to 348, 379 to 455, 506 to 539, 551 to 678, and 814 to 973; these read YSSI…TSPH, PSML…DSDS, DEFG…STSA, LRLP…ASSF, and NTID…IPDG. Composition is skewed to low complexity over residues 312–346, 379–392, and 400–419; these read SSIE…STTS, PSML…TPTA, and PSHS…NPPA. The span at 422 to 455 shows a compositional bias: acidic residues; the sequence is SEDDDDDDEEREDDEEECGMLDSDEQDLNDDSDS. The span at 554-574 shows a compositional bias: polar residues; it reads PSSSSENEQTTGSNQQSTIKT. A phosphoserine mark is found at Ser-555 and Ser-556. Basic residues-rich tracts occupy residues 588–614 and 625–644; these read RQRH…HHQQ and SHHH…ARKR. The span at 652 to 661 shows a compositional bias: polar residues; that stretch reads STTAEQQQTI. Positions 824 to 842 are enriched in low complexity; the sequence is NNNNNNNNNSGSSSSSNSS. Phosphoserine is present on Ser-854. A compositionally biased stretch (low complexity) spans 872–915; sequence QQQQQQQAQLQLQMQRQRNNSVGSNSPSSSSSSSSSSEHNSPIS. Residues 926–935 are compositionally biased toward polar residues; sequence SNSASMPSIG. The span at 936–963 shows a compositional bias: low complexity; that stretch reads STATTAAATAAATATTTTSATTTTTTTT. The FYVE-type zinc-finger motif lies at 972-1032; sequence DGKAPRCMSC…VCRECYVREV (61 aa). Positions 978, 981, 994, 997, 1002, 1005, 1024, and 1027 each coordinate Zn(2+).

The protein belongs to the lst-2 family.

Functionally, negative regulator of epidermal growth factor receptor (EGFR) signaling. This Drosophila virilis (Fruit fly) protein is Lateral signaling target protein 2 homolog.